A 291-amino-acid chain; its full sequence is 4-diphosphocytidyl-2-C-methyl-D-erythritol kinase (291 aa).

Lys-14 is an active-site residue. 96–106 (PFGAGLGGGSS) provides a ligand contact to ATP. Asp-138 is a catalytic residue.

The protein belongs to the GHMP kinase family. IspE subfamily.

It carries out the reaction 4-CDP-2-C-methyl-D-erythritol + ATP = 4-CDP-2-C-methyl-D-erythritol 2-phosphate + ADP + H(+). It participates in isoprenoid biosynthesis; isopentenyl diphosphate biosynthesis via DXP pathway; isopentenyl diphosphate from 1-deoxy-D-xylulose 5-phosphate: step 3/6. Functionally, catalyzes the phosphorylation of the position 2 hydroxy group of 4-diphosphocytidyl-2C-methyl-D-erythritol. The chain is 4-diphosphocytidyl-2-C-methyl-D-erythritol kinase from Chlorobium phaeovibrioides (strain DSM 265 / 1930) (Prosthecochloris vibrioformis (strain DSM 265)).